The following is a 181-amino-acid chain: Adenylyl-sulfate kinase (181 aa).

13–20 (GVSGAGKS) contributes to the ATP binding site. S87 acts as the Phosphoserine intermediate in catalysis.

The protein belongs to the APS kinase family.

The catalysed reaction is adenosine 5'-phosphosulfate + ATP = 3'-phosphoadenylyl sulfate + ADP + H(+). It participates in sulfur metabolism; hydrogen sulfide biosynthesis; sulfite from sulfate: step 2/3. Functionally, catalyzes the synthesis of activated sulfate. The chain is Adenylyl-sulfate kinase from Burkholderia ambifaria (strain ATCC BAA-244 / DSM 16087 / CCUG 44356 / LMG 19182 / AMMD) (Burkholderia cepacia (strain AMMD)).